The following is a 498-amino-acid chain: 3-octaprenyl-4-hydroxybenzoate carboxy-lyase (498 aa).

N177 contacts Mn(2+). Residues 180-182, 194-196, and 199-200 each bind prenylated FMN; these read IYR, RWL, and RG. Position 243 (E243) interacts with Mn(2+). Catalysis depends on D292, which acts as the Proton donor.

The protein belongs to the UbiD family. Homohexamer. Prenylated FMN is required as a cofactor. It depends on Mn(2+) as a cofactor.

Its subcellular location is the cell membrane. It catalyses the reaction a 4-hydroxy-3-(all-trans-polyprenyl)benzoate + H(+) = a 2-(all-trans-polyprenyl)phenol + CO2. It functions in the pathway cofactor biosynthesis; ubiquinone biosynthesis. Functionally, catalyzes the decarboxylation of 3-octaprenyl-4-hydroxy benzoate to 2-octaprenylphenol, an intermediate step in ubiquinone biosynthesis. The sequence is that of 3-octaprenyl-4-hydroxybenzoate carboxy-lyase from Methylococcus capsulatus (strain ATCC 33009 / NCIMB 11132 / Bath).